Consider the following 228-residue polypeptide: Lipoprotein-releasing system ATP-binding protein LolD (228 aa).

Residues 5 to 228 form the ABC transporter domain; it reads LRCHQVCKTY…DGLLTDITGA (224 aa). 41 to 48 contacts ATP; sequence GSSGSGKS.

It belongs to the ABC transporter superfamily. Lipoprotein translocase (TC 3.A.1.125) family. As to quaternary structure, the complex is composed of two ATP-binding proteins (LolD) and two transmembrane proteins (LolC and LolE).

The protein resides in the cell inner membrane. Its function is as follows. Part of the ABC transporter complex LolCDE involved in the translocation of mature outer membrane-directed lipoproteins, from the inner membrane to the periplasmic chaperone, LolA. Responsible for the formation of the LolA-lipoprotein complex in an ATP-dependent manner. This is Lipoprotein-releasing system ATP-binding protein LolD from Vibrio cholerae serotype O1 (strain ATCC 39315 / El Tor Inaba N16961).